Reading from the N-terminus, the 322-residue chain is Short-chain dehydrogenase TIC 32, chloroplastic (322 aa).

NADP(+) is bound by residues 36–42, 88–89, N115, and T136; these read GASSGIG and DL. S170 contacts substrate. Y192 (proton acceptor) is an active-site residue. Residues 298–314 are interaction with calmodulin; that stretch reads DTELAKKVWDFSTKLTD.

The protein belongs to the short-chain dehydrogenases/reductases (SDR) family. Part of the Tic complex. Interacts with TIC110. In terms of tissue distribution, expressed in leaves and roots.

It localises to the plastid. The protein localises to the chloroplast inner membrane. In terms of biological role, involved in protein precursor import into chloroplasts. Part of the redox regulon consisting of TIC32, TIC 55 and TIC62. The chain is Short-chain dehydrogenase TIC 32, chloroplastic from Arabidopsis thaliana (Mouse-ear cress).